Here is a 540-residue protein sequence, read N- to C-terminus: Beta-glucosidase 1B (540 aa).

Residues Gln-25, His-128, and Asn-174 each contribute to the substrate site. Glu-175 functions as the Proton donor in the catalytic mechanism. Tyr-316 contacts substrate. The Nucleophile role is filled by Glu-380. Residues Trp-430 and 437 to 438 (EW) contribute to the substrate site. The segment covering 481–492 (PAAETKKAATPS) has biased composition (low complexity). Positions 481–524 (PAAETKKAATPSPLKPHGAISNGVSKKSSATKEPKSASRKKGRK) are disordered.

The protein belongs to the glycosyl hydrolase 1 family.

It carries out the reaction Hydrolysis of terminal, non-reducing beta-D-glucosyl residues with release of beta-D-glucose.. Functionally, plays an important role in cellulose degradation. Shows hydrolytic activity against several glycosidic compounds. The protein is Beta-glucosidase 1B of Phanerodontia chrysosporium (White-rot fungus).